The chain runs to 571 residues: Urease subunit alpha (571 aa).

A Urease domain is found at 133–571; that stretch reads GGVDSHIHFI…LPLAQRYFLF (439 aa). His-138, His-140, and Lys-221 together coordinate Ni(2+). N6-carboxylysine is present on Lys-221. A substrate-binding site is contributed by His-223. Ni(2+)-binding residues include His-250 and His-276. The active-site Proton donor is His-324. Ni(2+) is bound at residue Asp-364.

It belongs to the metallo-dependent hydrolases superfamily. Urease alpha subunit family. In terms of assembly, heterotrimer of UreA (gamma), UreB (beta) and UreC (alpha) subunits. Three heterotrimers associate to form the active enzyme. Ni cation serves as cofactor. In terms of processing, carboxylation allows a single lysine to coordinate two nickel ions.

Its subcellular location is the cytoplasm. It carries out the reaction urea + 2 H2O + H(+) = hydrogencarbonate + 2 NH4(+). It functions in the pathway nitrogen metabolism; urea degradation; CO(2) and NH(3) from urea (urease route): step 1/1. The protein is Urease subunit alpha of Anaeromyxobacter sp. (strain Fw109-5).